Here is a 206-residue protein sequence, read N- to C-terminus: Large ribosomal subunit protein uL4 (206 aa).

The segment at 43-78 (NQRQGTHDTKTRAEVRGGGRKPWRQKGTGRARAGSS) is disordered. The segment covering 47–59 (GTHDTKTRAEVRG) has biased composition (basic and acidic residues). Positions 60–71 (GGRKPWRQKGTG) are enriched in basic residues.

This sequence belongs to the universal ribosomal protein uL4 family. In terms of assembly, part of the 50S ribosomal subunit.

In terms of biological role, one of the primary rRNA binding proteins, this protein initially binds near the 5'-end of the 23S rRNA. It is important during the early stages of 50S assembly. It makes multiple contacts with different domains of the 23S rRNA in the assembled 50S subunit and ribosome. Functionally, forms part of the polypeptide exit tunnel. The chain is Large ribosomal subunit protein uL4 from Desulforamulus reducens (strain ATCC BAA-1160 / DSM 100696 / MI-1) (Desulfotomaculum reducens).